The primary structure comprises 131 residues: Small ribosomal subunit protein bS6 (131 aa).

Positions 94 to 131 (DAVTEESQLAKNADEKRARKATTRRPDSNDDNDNHSDD) are disordered. Positions 117–131 (RRPDSNDDNDNHSDD) are enriched in basic and acidic residues.

The protein belongs to the bacterial ribosomal protein bS6 family.

In terms of biological role, binds together with bS18 to 16S ribosomal RNA. This chain is Small ribosomal subunit protein bS6, found in Psychrobacter cryohalolentis (strain ATCC BAA-1226 / DSM 17306 / VKM B-2378 / K5).